The primary structure comprises 539 residues: M protein, serotype 24 (539 aa).

The N-terminal stretch at methionine 1 to alanine 42 is a signal peptide. An A-1 repeat occupies leucine 118–alanine 152. The tract at residues leucine 118–glutamate 301 is 5.3 X 35 AA tandem repeats, A-type. Residues leucine 153–alanine 187 form an A-2 repeat. Residues leucine 188–alanine 222 form an A-3 repeat. One copy of the A-4 repeat lies at leucine 223 to alanine 257. An A-5 repeat occupies leucine 258–alanine 292. The stretch at leucine 293–lysine 297 is one A-6; truncated repeat. A disordered region spans residues lysine 297–alanine 401. 3 C repeats span residues alanine 298 to histidine 332, glutamine 333 to histidine 367, and glutamine 368 to leucine 402. The span at glutamine 303–glutamine 312 shows a compositional bias: polar residues. 3 stretches are compositionally biased toward basic and acidic residues: residues leucine 314–lysine 340, leucine 349–lysine 375, and leucine 384–alanine 401. D repeat units lie at residues alanine 435 to glutamate 440, alanine 441 to glutamate 446, alanine 449 to glutamate 454, and alanine 456 to glycine 461. Residues alanine 456–threonine 511 are disordered. The short motif at leucine 505–glycine 509 is the LPXTG sorting signal element. Threonine 508 carries the post-translational modification Pentaglycyl murein peptidoglycan amidated threonine. Residues glycine 509–asparagine 539 constitute a propeptide, removed by sortase.

The protein belongs to the M protein family.

It is found in the secreted. Its subcellular location is the cell wall. This protein is one of the different antigenic serotypes of protein M. Protein M is closely associated with virulence of the bacterium and can render the organism resistant to phagocytosis. The chain is M protein, serotype 24 (emm24) from Streptococcus pyogenes.